A 1333-amino-acid polypeptide reads, in one-letter code: MHSTNNNSNKRNNEEKHKQPEIDSSANNGEGTSGTRAQTVGDTATEAGVRNETEAGASTRRQTDGTGLSGTNAKIATASSARQADVEKPADVTFTIENVDDVGIMQQKKPPTVVQSRTDVFNEQFANEALHPTTKVIFNGLDVNTEVQPLSDDFKQISDPKGYLTYSVKYEDQFTKKDKLRASEADDRIVGPTVNLFKYGAAVVNIDLNRDFFDTATGIDLTKGIPLVQDLLVPIGVTAGAEQSAEYVSGLLMVLFKVMTDNRLVIVGETTTPMSNTLSTVVNNVLRTTYHNNVGVNPALLRDFTQVNWLNRDITNMLQQAGTKYGLGLTETRLDYVRLVKTIVGHALNIDHFAASVLNINLRALMEANVTADDRIKALQAHSMISTQFHGPNQGALRPELAFDHDHIIRCLMLAAANYPRLEGIIVQINTGYVASANVIRPVSEKRYFPENLEQNQSAARLVSAVKARASEADISSIHLAIAREVSPMFNVHELKKIAESFEDPSSIVVVLEFILFALFFPTEFNRIKGDIQNVLLLFFSRWYPVEYGIFVQRGATYTINAAGEFEFSGRNEKWDQALYLSEHFPALFSDVPLAGANTIIAIMRLFTPQGFLRTDDLAIAANFPRASRNPQTYIPYTNQRGTVTNEFASRFRTIVATLANVVNERAVQDDMQKATRSCTKQWLRHLETQFDNIAVAHTDHLSVVYATMSNFMLNFTNNFSGNHATFKPDQYVITSPEGSYKPIIERQGETVDGLTIIDTSIVWPILCQCTYPLVRQSGKGVDAVSIMEEIVYPDPSTTLSQSLSVAQVLSKLTLPDAFINMILSGGDSVVMRTYQTEADDDLDEGIRMTTYDQYLSHIRERLHITNVPDPIYITGASTPDQIAASVQATHVAVVLYQSGVINGPASTYLRENEVLVVMPDYYDVVSRFANANLQMNNNRYHESVLEIADIFDQADFIQTSDAVRQLRALMPTLSTSQIRHAIERIAQITDVDSTDYGKLTLRFLGTLTRSLKMQNAQIRRIRPDGTVLRYDDQIDIEAFRWSRYFLDELQLRRLSVGLRLITNPRIARRFNGVRIMYLTDDDPDPDFVPDVPEGYVAVQYAHRLFSSSLANKRNRVTYTHPPTGMAYPSPTGRPHVHMTINERAGMSKLVADNIIASVIKSNWVVDILDIEYTAEVMTPSEGYTQHVDAESIMTAPKGKLFHLQFMDGLLRPEPSAFDPPASGEDMRLIYPLQPISVARSMRAIVNHNEVDRPRGAVAPSSYEMDTGTLSRNGDLLYSPVANGQVGIPKLEVDHISFSNVVSMMTANIRTGDDMAVERVNPDDVRAINIRNA.

Residues 1–10 (MHSTNNNSNK) are compositionally biased toward low complexity. The disordered stretch occupies residues 1 to 71 (MHSTNNNSNK…QTDGTGLSGT (71 aa)). Basic and acidic residues predominate over residues 11 to 21 (RNNEEKHKQPE). Residues 22–42 (IDSSANNGEGTSGTRAQTVGD) are compositionally biased toward polar residues.

This sequence belongs to the turreted BTV-fold inner capsid family. As to quaternary structure, homodecamer; each decamer is made up of two conformers of VP2, called VP2A and VP2B. 12 homodecamers assemble to form an icosahedral capsid.

It localises to the virion. Functionally, inner capsid protein that self-assembles to form an icosahedral capsid with a T=2 symmetry, which consists of 120 copies of VP2, with channels at each of its five-fold vertices. This capsid constitutes the innermost concentric layer of the viral mature particle. In Bombyx mori (Silk moth), this protein is Inner capsid protein VP1.